Consider the following 169-residue polypeptide: Translationally-controlled tumor protein homolog (169 aa).

The TCTP domain occupies Met-1 to Val-169.

Belongs to the TCTP family.

Its subcellular location is the cytoplasm. The protein localises to the cytoskeleton. In terms of biological role, involved in protein synthesis. Involved in microtubule stabilization. The sequence is that of Translationally-controlled tumor protein homolog from Alternaria alternata (Alternaria rot fungus).